The primary structure comprises 224 residues: Ethylene-inducing xylanase 5 (224 aa).

An N-terminal signal peptide occupies residues 1–16 (MLKSLVVLLLTSRVIA). Residues 32 to 218 (QATPNSQGTH…SSGFAEMTVA (187 aa)) form the GH11 domain. The N-linked (GlcNAc...) asparagine glycan is linked to asparagine 88. Catalysis depends on glutamate 117, which acts as the Nucleophile. Glutamate 205 (proton donor) is an active-site residue.

This sequence belongs to the glycosyl hydrolase 11 (cellulase G) family.

The catalysed reaction is Endohydrolysis of (1-&gt;4)-beta-D-xylosidic linkages in xylans.. It participates in glycan degradation; xylan degradation. Functionally, endo-1,4-beta-xylanase involved in the hydrolysis of xylan, a major structural heterogeneous polysaccharide found in plant biomass representing the second most abundant polysaccharide in the biosphere, after cellulose. May act as an elicitor of plant defense responses in certain plants but does not exhibit any cell death when transiently expressed in N.benthamiana. This is Ethylene-inducing xylanase 5 from Verticillium dahliae (strain VdLs.17 / ATCC MYA-4575 / FGSC 10137) (Verticillium wilt).